The primary structure comprises 457 residues: Argininosuccinate lyase (457 aa).

Belongs to the lyase 1 family. Argininosuccinate lyase subfamily.

Its subcellular location is the cytoplasm. The enzyme catalyses 2-(N(omega)-L-arginino)succinate = fumarate + L-arginine. It functions in the pathway amino-acid biosynthesis; L-arginine biosynthesis; L-arginine from L-ornithine and carbamoyl phosphate: step 3/3. This chain is Argininosuccinate lyase, found in Salmonella arizonae (strain ATCC BAA-731 / CDC346-86 / RSK2980).